Here is a 195-residue protein sequence, read N- to C-terminus: Killer cell lectin-like receptor subfamily G member 1 (195 aa).

The Cytoplasmic portion of the chain corresponds to 1–38 (MTDSVIYSMLELPTATQAQNDYGPQQKSSSSRPSCSCL). Positions 5 to 10 (VIYSML) match the ITIM motif motif. Residues 39–59 (VAIALGLLTAVLLSVLLYQWI) form a helical; Signal-anchor for type II membrane protein membrane-spanning segment. Residues 60–195 (LCQGSNYSTC…KCPFADQALF (136 aa)) lie on the Extracellular side of the membrane. The N-linked (GlcNAc...) asparagine glycan is linked to Asn-65. The cysteines at positions 75 and 86 are disulfide-linked. The C-type lectin domain maps to 82–185 (YGNHCYYFSV…CEVPLHWVCK (104 aa)). N-linked (GlcNAc...) asparagine glycosylation is found at Asn-97, Asn-137, and Asn-150. 2 cysteine pairs are disulfide-bonded: Cys-103/Cys-184 and Cys-163/Cys-176.

In terms of assembly, forms a monomer and homodimer; disulfide-linked. Interacts (via ITIM motif) with PTPN11 and INPP5D. In terms of tissue distribution, expressed specifically on natural killer (NK) cells and T-cells, mainly CD8 T-cells.

It localises to the cell membrane. Plays an inhibitory role on natural killer (NK) cells and T-cell functions upon binding to their non-MHC ligands. May mediate missing self recognition by binding to a highly conserved site on classical cadherins, enabling it to monitor expression of E-cadherin/CDH1, N-cadherin/CDH2 and R-cadherin/CDH4 on target cells. In Homo sapiens (Human), this protein is Killer cell lectin-like receptor subfamily G member 1 (KLRG1).